Reading from the N-terminus, the 487-residue chain is N-succinylglutamate 5-semialdehyde dehydrogenase (487 aa).

221 to 226 (GSSDTG) is an NAD(+) binding site. Catalysis depends on residues Glu244 and Cys278.

Belongs to the aldehyde dehydrogenase family. AstD subfamily.

The enzyme catalyses N-succinyl-L-glutamate 5-semialdehyde + NAD(+) + H2O = N-succinyl-L-glutamate + NADH + 2 H(+). The protein operates within amino-acid degradation; L-arginine degradation via AST pathway; L-glutamate and succinate from L-arginine: step 4/5. Functionally, catalyzes the NAD-dependent reduction of succinylglutamate semialdehyde into succinylglutamate. In Burkholderia pseudomallei (strain 1106a), this protein is N-succinylglutamate 5-semialdehyde dehydrogenase.